The chain runs to 205 residues: Regulator of G-protein signaling 4 (205 aa).

S-palmitoyl cysteine attachment occurs at residues Cys2, Cys12, and Cys95. The RGS domain occupies 62-178 (SLENLISHEC…LKSRFYLDLV (117 aa)).

Palmitoylated on Cys-2 and/or Cys-12. Post-translationally, phosphorylated by cyclic GMP-dependent protein kinase.

Inhibits signal transduction by increasing the GTPase activity of G protein alpha subunits thereby driving them into their inactive GDP-bound form. Activity on G(z)-alpha is inhibited by phosphorylation of the G-protein. Activity on G(z)-alpha and G(i)-alpha-1 is inhibited by palmitoylation of the G-protein. The sequence is that of Regulator of G-protein signaling 4 (RGS4) from Pongo abelii (Sumatran orangutan).